A 369-amino-acid chain; its full sequence is Anhydro-N-acetylmuramic acid kinase (369 aa).

12 to 19 (GTSLDGVD) contributes to the ATP binding site.

This sequence belongs to the anhydro-N-acetylmuramic acid kinase family.

The enzyme catalyses 1,6-anhydro-N-acetyl-beta-muramate + ATP + H2O = N-acetyl-D-muramate 6-phosphate + ADP + H(+). The protein operates within amino-sugar metabolism; 1,6-anhydro-N-acetylmuramate degradation. Its pathway is cell wall biogenesis; peptidoglycan recycling. Catalyzes the specific phosphorylation of 1,6-anhydro-N-acetylmuramic acid (anhMurNAc) with the simultaneous cleavage of the 1,6-anhydro ring, generating MurNAc-6-P. Is required for the utilization of anhMurNAc either imported from the medium or derived from its own cell wall murein, and thus plays a role in cell wall recycling. This Escherichia coli O45:K1 (strain S88 / ExPEC) protein is Anhydro-N-acetylmuramic acid kinase.